A 509-amino-acid chain; its full sequence is Transmembrane protein 104 homolog (509 aa).

Over 1 to 19 (MPRLVNGREAAPTYSNLVG) the chain is Cytoplasmic. The chain crosses the membrane as a helical span at residues 20 to 40 (FIFIFNLIVGTGALTLPGVFA). Residues 41–45 (RAGWM) are Extracellular-facing. A helical transmembrane segment spans residues 46–66 (LSLIVIVLLAIISYMTVTFII). Residues 67-151 (EAMACANAIR…ATLFFNEFGR (85 aa)) are Cytoplasmic-facing. A helical transmembrane segment spans residues 152–172 (VMFYLCLIVYLYGDLSIYSAA). Topologically, residues 173 to 218 (VARSLRDVVCDQTNGTDTNNLMYWPGDFENNTSLACWKEHTISRLN) are extracellular. Residues Asn186, Asn202, and Asn203 are each glycosylated (N-linked (GlcNAc...) asparagine). The helical transmembrane segment at 219 to 239 (MYRVLLIGFTLIFGPFVYFNV) threads the bilayer. Topologically, residues 240-248 (QKTKYLQML) are cytoplasmic. A helical membrane pass occupies residues 249 to 269 (TAAFRWMAFTLMICISLKLLI). Residues 270 to 277 (SRGAKGHP) are Extracellular-facing. The chain crosses the membrane as a helical span at residues 278–298 (ATFNVYGIPSLFGACVYSFMC). Topologically, residues 299 to 320 (HHSLPSLLAPIRHKSMVSKILS) are cytoplasmic. The helical transmembrane segment at 321 to 341 (IDYIIICAFYILLAMTGIFAF) threads the bilayer. At 342 to 361 (ERIEDLYTLDFLPYDVAYVD) the chain is on the extracellular side. A helical transmembrane segment spans residues 362–382 (FWSGLLICIDYFLALFPIFTL). Residues 383 to 411 (STSFPIVAITLKNNLQSLFLDMSQYESYS) are Cytoplasmic-facing. The chain crosses the membrane as a helical span at residues 412-432 (VILRLCFPLLAIIPPFCITYF). Topologically, residues 433 to 439 (TESLSSL) are extracellular. The chain crosses the membrane as a helical span at residues 440–460 (VAFTGTYAGTGIQYIIPVFLV). Residues 461 to 487 (YFARRTCSELLGSGVVNRFKSPFKSSA) are Cytoplasmic-facing. A helical membrane pass occupies residues 488-508 (WLVFVFIWSILCVCLVSINLF). Ser509 is a topological domain (extracellular).

Belongs to the TMEM104 family.

Its subcellular location is the membrane. The sequence is that of Transmembrane protein 104 homolog from Drosophila melanogaster (Fruit fly).